Reading from the N-terminus, the 121-residue chain is Large ribosomal subunit protein bL20 (121 aa).

This sequence belongs to the bacterial ribosomal protein bL20 family.

Its function is as follows. Binds directly to 23S ribosomal RNA and is necessary for the in vitro assembly process of the 50S ribosomal subunit. It is not involved in the protein synthesizing functions of that subunit. This Francisella tularensis subsp. mediasiatica (strain FSC147) protein is Large ribosomal subunit protein bL20.